A 511-amino-acid polypeptide reads, in one-letter code: Frizzled/smoothened-like sans CRD protein C (511 aa).

The first 25 residues, 1 to 25 (MNQINKFIKNLYLIIITIILIIVIS), serve as a signal peptide directing secretion. Residues 26–93 (NDNNGLFING…QWESYFEMSL (68 aa)) lie on the Extracellular side of the membrane. Residue N51 is glycosylated (N-linked (GlcNAc...) asparagine). A helical membrane pass occupies residues 94–114 (IMGSISMFASLFLIITYSPLI). Residues 115 to 122 (NKKHTRHT) lie on the Cytoplasmic side of the membrane. Residues 123-143 (VGILCMSIGIFFVMVSDGRQL) traverse the membrane as a helical segment. The Extracellular segment spans residues 144 to 172 (WDIESPGEYKKYCPDTGRYARQSDTKCLT). The chain crosses the membrane as a helical span at residues 173–193 (TGLFFQFGCVTAIGWWSILAV). Topologically, residues 194–209 (DLWMTIAKKVQTTKKQ) are cytoplasmic. Residues 210–230 (LLYYLIGINTVSLILTFGPVV) traverse the membrane as a helical segment. The Extracellular segment spans residues 231–253 (KNQYGFGNAAIGCWMLDLKYQYG). The chain crosses the membrane as a helical span at residues 254–274 (FFWIPVGICLSVGSVFIGLIF). Over 275-295 (WEIYKISDAVKKRYLKKHIKP) the chain is Cytoplasmic. The helical transmembrane segment at 296 to 316 (LCLIVLMCLEFLYMFIYYSYI) threads the bilayer. At 317-357 (TANQPTYNKHVAEYIMCLIINAANVPGSYTCQLKTVSPTAQ) the chain is on the extracellular side. Residues 358 to 378 (FLFLIAIRLMGLQGLIFYGLT) traverse the membrane as a helical segment. Topologically, residues 379–511 (AATKKVWANS…RVNSPDNLQP (133 aa)) are cytoplasmic. The interval 430 to 511 (NGYTTGGSDN…RVNSPDNLQP (82 aa)) is disordered. The span at 433–443 (TTGGSDNGVGS) shows a compositional bias: gly residues. Polar residues predominate over residues 451 to 460 (KSSSNGGAQD). The segment covering 461 to 485 (NNNNNNNNNNNNNNNNNNNNNNNNN) has biased composition (low complexity). Residues 486–511 (SSSLEISGVESNNSTPRVNSPDNLQP) show a composition bias toward polar residues.

It belongs to the G-protein coupled receptor Fz/Smo family.

Its subcellular location is the membrane. The polypeptide is Frizzled/smoothened-like sans CRD protein C (fscC) (Dictyostelium discoideum (Social amoeba)).